Consider the following 375-residue polypeptide: Eukaryotic translation initiation factor 3 subunit F (375 aa).

Residues 30–166 form the MPN domain; sequence VVIQPQALFS…TRAYISAPVG (137 aa). The disordered stretch occupies residues 307 to 375; it reads LGGESGSGES…EAQNGKEEKK (69 aa). The span at 323–332 shows a compositional bias: gly residues; that stretch reads QRGGKGGRGG. Basic and acidic residues-rich tracts occupy residues 336–345 and 358–375; these read TQERSGEEAR and RSYE…EEKK.

This sequence belongs to the eIF-3 subunit F family. Component of the eukaryotic translation initiation factor 3 (eIF-3) complex.

The protein localises to the cytoplasm. Its function is as follows. Component of the eukaryotic translation initiation factor 3 (eIF-3) complex, which is involved in protein synthesis of a specialized repertoire of mRNAs and, together with other initiation factors, stimulates binding of mRNA and methionyl-tRNAi to the 40S ribosome. The eIF-3 complex specifically targets and initiates translation of a subset of mRNAs involved in cell proliferation. This is Eukaryotic translation initiation factor 3 subunit F from Aspergillus niger (strain ATCC MYA-4892 / CBS 513.88 / FGSC A1513).